We begin with the raw amino-acid sequence, 87 residues long: Venom serine protease inhibitor (87 aa).

The N-terminal stretch at 1–23 (MPRLVLVSFLFLAIFSVFIGGFA) is a signal peptide. Intrachain disulfides connect Cys-27–Cys-61, Cys-36–Cys-57, Cys-40–Cys-53, Cys-44–Cys-81, and Cys-63–Cys-75. Residues 27 to 81 (CPRNEIFTRCHAACQPSCARLARKPFCIKICKPGCICTSGYLRNKNNVCVPRSRC) enclose the TIL domain.

This sequence belongs to the serine protease inhibitor-like (TIL domain-containing) family. As to expression, specifically expressed by the venom gland.

It localises to the secreted. Its function is as follows. Antifibrinolytic and antimicrobial serine protease inhibitor. Inhibits trypsin, plasmin and microbial serine proteases but not chymotrypsin, thrombin and elastase. Inhibits the plasmin-mediated degradation of fibrin to fibrin degradation products. Also binds to bacterial and fungal surfaces and exhibits antimicrobial activity against fungi as well as Gram-positive and Gram-negative bacteria. The polypeptide is Venom serine protease inhibitor (Apis cerana (Indian honeybee)).